The sequence spans 165 residues: AILTGVPYYILPSTSRAGFSPDNLRKNTSQPSCPLDLITQLRFPRRIGVPVIFTPQNSSLKVVPLSHNLNIHTCSDLWFCPESKIWTVKSSSIHRGLVVTTGGTFRSLGSWFRIERHGDSYKLVHCPRGSTPCRDVGIETVGGGGRRYLAPRDRPLAVRFTRASG.

N-linked (GlcNAc...) asparagine glycans are attached at residues Asn-27 and Asn-57. Intrachain disulfides connect Cys-33/Cys-80 and Cys-126/Cys-133.

This sequence belongs to the protease inhibitor I3 (leguminous Kunitz-type inhibitor) family. In terms of assembly, dimer.

Its function is as follows. Glucose and N-acetylglucosamine binding lectin. Has hemagglutinating activity against human and rabbit erythrocytes which does not require divalent cations. Inhibits factor Xa and, to a lesser extent, trypsin. Does not inhibit neutrophil elastase, human plasma kallikrein, papain, human plasmin, porcine pancreatic kallikrein and bovin chymotrypsin. Has insecticidal activity against the termite species N.corniger. Induces apoptosis in prostrate cancer cell lines DU145 and PC3. The protein is Bark lectin isoform 1 of Crateva tapia (Garlic-pear tree).